We begin with the raw amino-acid sequence, 434 residues long: Nuclear receptor subfamily 1 group I member 2 (434 aa).

Positions 38-107 form a DNA-binding region, nuclear receptor; it reads PQICRVCGDK…RLRKCLESGM (70 aa). 2 NR C4-type zinc fingers span residues 41 to 61 and 77 to 102; these read CRVCGDKATGYHFNVMTCEGC and CPFRKGACEITRKTRRQCQACRLRKC. Positions 66–92 match the Bipartite nuclear localization signal motif; the sequence is RRAMKRNARLRCPFRKGACEITRKTRR. Positions 108 to 145 are hinge; sequence KKEMIMSDEAVEERRALIKRKKSERTGTQPLGVQGLTE. Residues 146–433 enclose the NR LBD domain; it reads EQRMMIRELM…LMQELFGITG (288 aa). Residues S247, 285 to 288, and H407 contribute to the hyperforin site; that span reads QLRF.

Belongs to the nuclear hormone receptor family. NR1 subfamily. As to quaternary structure, heterodimer with RXR. Interacts with NCOA1. Interacts (via domain NR LBD) with CRY1 and CRY2 in a ligand-dependent manner. Expressed in liver, colon and small intestine.

The protein resides in the nucleus. Nuclear receptor that binds and is activated by variety of endogenous and xenobiotic compounds. Transcription factor that activates the transcription of multiple genes involved in the metabolism and secretion of potentially harmful xenobiotics, drugs and endogenous compounds. Activated by the antibiotic rifampicin and various plant metabolites, such as hyperforin, guggulipid, colupulone, and isoflavones. Response to specific ligands is species-specific. Activated by naturally occurring steroids, such as pregnenolone and progesterone. Binds to a response element in the promoters of the CYP3A4 and ABCB1/MDR1 genes. This Homo sapiens (Human) protein is Nuclear receptor subfamily 1 group I member 2 (NR1I2).